The primary structure comprises 500 residues: Lysine--tRNA ligase (500 aa).

Glu410 and Glu417 together coordinate Mg(2+).

This sequence belongs to the class-II aminoacyl-tRNA synthetase family. Homodimer. Requires Mg(2+) as cofactor.

The protein localises to the cytoplasm. It carries out the reaction tRNA(Lys) + L-lysine + ATP = L-lysyl-tRNA(Lys) + AMP + diphosphate. This Pseudomonas putida (strain W619) protein is Lysine--tRNA ligase.